A 191-amino-acid chain; its full sequence is MFSPLLFFAVSISCVLANSNEIKDGGSDRGAHSDRAGLWFGPRLGKRSLRISTEDNRQAFFKLLEAADALKYYYDRLPYEMQADEPETRVTKKVIFTPKLGRSLAYDDKVFENVEFTPRLGRRLADDMPATPADQELYRPDPDQIDSRTKYFSPRLGRTMNFSPRLGRELSYDMLPSKLRLVRSTNRTQST.

Positions 1–17 (MFSPLLFFAVSISCVLA) are cleaved as a signal peptide. The residue at position 44 (Leu44) is a Leucine amide. The propeptide occupies 48 to 91 (SLRISTEDNRQAFFKLLEAADALKYYYDRLPYEMQADEPETRVT). Leucine amide is present on residues Leu100, Leu120, Leu156, and Leu166. Residues 169–191 (ELSYDMLPSKLRLVRSTNRTQST) constitute a propeptide that is removed on maturation.

This sequence belongs to the pyrokinin family. In terms of tissue distribution, expressed in the subesophageal ganglion.

It is found in the secreted. Functionally, a hormone that controls sex pheromone production in females and pheromone responsiveness in male. The sequence is that of PBAN-type neuropeptides from Spodoptera littoralis (Egyptian cotton leafworm).